The following is a 220-amino-acid chain: Deoxyribose-phosphate aldolase 1 (220 aa).

Aspartate 89 (proton donor/acceptor) is an active-site residue. The active-site Schiff-base intermediate with acetaldehyde is the lysine 151. The Proton donor/acceptor role is filled by lysine 180.

It belongs to the DeoC/FbaB aldolase family. DeoC type 1 subfamily.

It is found in the cytoplasm. The enzyme catalyses 2-deoxy-D-ribose 5-phosphate = D-glyceraldehyde 3-phosphate + acetaldehyde. It participates in carbohydrate degradation; 2-deoxy-D-ribose 1-phosphate degradation; D-glyceraldehyde 3-phosphate and acetaldehyde from 2-deoxy-alpha-D-ribose 1-phosphate: step 2/2. Its function is as follows. Catalyzes a reversible aldol reaction between acetaldehyde and D-glyceraldehyde 3-phosphate to generate 2-deoxy-D-ribose 5-phosphate. This chain is Deoxyribose-phosphate aldolase 1, found in Staphylococcus aureus (strain MRSA252).